A 184-amino-acid polypeptide reads, in one-letter code: Ethylene-responsive transcription factor ERF122 (184 aa).

The AP2/ERF DNA-binding region spans 120–177; the sequence is KYKGVRKKPSGKWAAEIWDPRSKSRRWLGTFLTAEMAAQSYNDAAAEYRARRGKTNGE.

Belongs to the AP2/ERF transcription factor family. ERF subfamily.

It localises to the nucleus. Its function is as follows. Probably acts as a transcriptional activator. Binds to the GCC-box pathogenesis-related promoter element. May be involved in the regulation of gene expression by stress factors and by components of stress signal transduction pathways. This chain is Ethylene-responsive transcription factor ERF122 (ERF122), found in Arabidopsis thaliana (Mouse-ear cress).